We begin with the raw amino-acid sequence, 229 residues long: 3-isopropylmalate dehydratase small subunit (229 aa).

A disordered region spans residues 208–229 (KIESAREPDDDWTGPLADRGII).

The protein belongs to the LeuD family. LeuD type 1 subfamily. In terms of assembly, heterodimer of LeuC and LeuD.

The enzyme catalyses (2R,3S)-3-isopropylmalate = (2S)-2-isopropylmalate. Its pathway is amino-acid biosynthesis; L-leucine biosynthesis; L-leucine from 3-methyl-2-oxobutanoate: step 2/4. Functionally, catalyzes the isomerization between 2-isopropylmalate and 3-isopropylmalate, via the formation of 2-isopropylmaleate. The polypeptide is 3-isopropylmalate dehydratase small subunit (Bifidobacterium longum subsp. infantis (strain ATCC 15697 / DSM 20088 / JCM 1222 / NCTC 11817 / S12)).